Reading from the N-terminus, the 377-residue chain is Glutamate 5-kinase (377 aa).

ATP is bound at residue K20. Positions 60, 147, and 159 each coordinate substrate. 179–180 provides a ligand contact to ATP; that stretch reads SD. Residues 281-355 enclose the PUA domain; sequence HGQLHLDAGA…GQSTSDLPEF (75 aa).

This sequence belongs to the glutamate 5-kinase family.

The protein resides in the cytoplasm. The enzyme catalyses L-glutamate + ATP = L-glutamyl 5-phosphate + ADP. Its pathway is amino-acid biosynthesis; L-proline biosynthesis; L-glutamate 5-semialdehyde from L-glutamate: step 1/2. In terms of biological role, catalyzes the transfer of a phosphate group to glutamate to form L-glutamate 5-phosphate. The protein is Glutamate 5-kinase of Corynebacterium jeikeium (strain K411).